A 219-amino-acid polypeptide reads, in one-letter code: 2-hydroxy-3-keto-5-methylthiopentenyl-1-phosphate phosphatase (219 aa).

It belongs to the HAD-like hydrolase superfamily. MtnX family.

It catalyses the reaction 2-hydroxy-5-methylsulfanyl-3-oxopent-1-enyl phosphate + H2O = 1,2-dihydroxy-5-(methylsulfanyl)pent-1-en-3-one + phosphate. The protein operates within amino-acid biosynthesis; L-methionine biosynthesis via salvage pathway; L-methionine from S-methyl-5-thio-alpha-D-ribose 1-phosphate: step 4/6. Functionally, dephosphorylates 2-hydroxy-3-keto-5-methylthiopentenyl-1-phosphate (HK-MTPenyl-1-P) yielding 1,2-dihydroxy-3-keto-5-methylthiopentene (DHK-MTPene). The chain is 2-hydroxy-3-keto-5-methylthiopentenyl-1-phosphate phosphatase from Bacillus mycoides (strain KBAB4) (Bacillus weihenstephanensis).